The primary structure comprises 365 residues: UDP-galactose transporter homolog 1 (365 aa).

The next 2 helical transmembrane spans lie at 42 to 62 (IIDLIICVSGIYASFLTWAVL) and 80 to 100 (ASLVINTVQSFLAAAVGYAYL). Asn-115 is a glycosylation site (N-linked (GlcNAc...) asparagine). The next 2 membrane-spanning stretches (helical) occupy residues 182-202 (YAVVVLVTIGVSMFTIFHAAP) and 206-226 (SGAGSEHQLYGLGLLGISMLL). N-linked (GlcNAc...) asparagine glycosylation is present at Asn-231. The next 4 membrane-spanning stretches (helical) occupy residues 249 to 269 (VMCGLNLLTGVFTTVSLLTFS), 289 to 309 (DIVLFGLCGAVGQVFIFQTLE), 315 to 335 (VLVTVNVTRKMFSMLLSVVWF), and 339 to 359 (LTLGQWAGVAAVFGGIGFEAW).

The protein belongs to the nucleotide-sugar transporter family. SLC35B subfamily.

Its subcellular location is the endoplasmic reticulum membrane. Its function is as follows. May be involved in specific transport of UDP-Gal from the cytosol to the Golgi lumen. Involved in the maintenance of optimal conditions for the folding of secretory pathway proteins in the endoplasmic reticulum. This is UDP-galactose transporter homolog 1 (HUT1) from Yarrowia lipolytica (strain CLIB 122 / E 150) (Yeast).